The primary structure comprises 454 residues: Retinoblastoma-binding protein homolog 5 (454 aa).

WD repeat units lie at residues 23–64, 65–104, 153–192, 196–235, 248–288, and 292–330; these read LQNA…RTFS, AHCL…LLHR, SSDE…CVAW, NTVQ…HQRG, VNKA…LIKI, and NKGE…NWSA.

As to quaternary structure, component of the SET2 complex (also known as the SET1/COMPASS complex), which contains at least set-2, swd-2.1, cfp-1, rbbp-5, wdr-5.1, dpy-30 and ash-2.

It localises to the nucleus. Functionally, required for di- and trimethylation at 'Lys-4' of histone H3. Regulates left/right asymmetry of ASE sensory neurons, via its role as a component of the SET2 complex. This chain is Retinoblastoma-binding protein homolog 5 (rbbp-5), found in Caenorhabditis elegans.